The primary structure comprises 223 residues: MTPTRAQLAAFVDHTLLKPEATAADVAALVTEAAELGVYAVCVSPPMVPAAVQAGAGVRVASVAGFPSGKHVSAVKAHEAALAVASGAAEIDMVIDVGAALAGDLDGVRADIAAVRGAVGGAVLKVIVESSALLALADEHTLVRVCRAAEDAGADFVKTSTGFHPSGGASVRAVALMAEAVGGRLGVKASGGIRTAADALAMLDAGATRLGLSGTRAVLDGLG.

Asp92 (proton donor/acceptor) is an active-site residue. Lys158 acts as the Schiff-base intermediate with acetaldehyde in catalysis. Catalysis depends on Lys188, which acts as the Proton donor/acceptor.

The protein belongs to the DeoC/FbaB aldolase family. DeoC type 1 subfamily.

It is found in the cytoplasm. It catalyses the reaction 2-deoxy-D-ribose 5-phosphate = D-glyceraldehyde 3-phosphate + acetaldehyde. Its pathway is carbohydrate degradation; 2-deoxy-D-ribose 1-phosphate degradation; D-glyceraldehyde 3-phosphate and acetaldehyde from 2-deoxy-alpha-D-ribose 1-phosphate: step 2/2. Its function is as follows. Catalyzes a reversible aldol reaction between acetaldehyde and D-glyceraldehyde 3-phosphate to generate 2-deoxy-D-ribose 5-phosphate. The chain is Deoxyribose-phosphate aldolase from Mycobacterium avium (strain 104).